We begin with the raw amino-acid sequence, 727 residues long: Cyclin-T1 (727 aa).

The residue at position 117 (serine 117) is a Phosphoserine. The Nuclear localization signal, and interaction with Tat-TAR RNA motif lies at 253-270 (KRIRNWRACQAAKKTKAD). Residues 302–322 (MSTSSTTSTVPSLPTTEESSS) are compositionally biased toward low complexity. The segment at 302-326 (MSTSSTTSTVPSLPTTEESSSNLSG) is disordered. A Glycyl lysine isopeptide (Lys-Gly) (interchain with G-Cter in SUMO2) cross-link involves residue lysine 343. A coiled-coil region spans residues 386-427 (SAKVSLKEYRAKHAEELAAQKRQLENMEANVKSQYAYAAQNL). Serine 390 bears the Phosphoserine mark. At lysine 392 the chain carries N6-acetyllysine. Lysine 417 participates in a covalent cross-link: Glycyl lysine isopeptide (Lys-Gly) (interchain with G-Cter in SUMO2). ADP-ribosylserine is present on residues serine 418, serine 476, and serine 477. The tract at residues 482–552 (IKMRIKVHAA…RPGDPKHSSQ (71 aa)) is histidine-rich domain (HRD). Residue lysine 483 forms a Glycyl lysine isopeptide (Lys-Gly) (interchain with G-Cter in SUMO2) linkage. Positions 486-508 (IKVHAAPDKHNSIDDSVTKSREH) are enriched in basic and acidic residues. Disordered regions lie at residues 486–591 (IKVH…DHPA) and 692–727 (LNPR…PLPK). Lysine 487 bears the N6-(ADP-ribosyl)lysine mark. At histidine 489 the chain carries ADP-ribosylhistidine. Phosphoserine occurs at positions 497 and 501. The segment covering 509-532 (KEKHKTHPSNHHHHHNHHSHKHSH) has biased composition (basic residues). ADP-ribosylhistidine is present on histidine 532. ADP-ribosylserine occurs at positions 533, 551, and 554. Residue histidine 558 is modified to ADP-ribosylhistidine. Low complexity predominate over residues 562–572 (SLSSSFSSSSS). Serine 565 is subject to ADP-ribosylserine. Phosphoserine is present on serine 566. Residues 711-727 (LPPLPSEPPPPLPPLPK) show a composition bias toward pro residues.

It belongs to the cyclin family. Cyclin C subfamily. Cyclin-T1 is the predominant cyclin that associates with CDK9 to form a heterodimer called P-TEFb. P-TEFb forms a complex with AFF4/AF5Q31. Component of a complex which is at least composed of HTATSF1/Tat-SF1, P-TEFb complex, RNA pol II, SUPT5H, and NCL/nucleolin. Component of the 7SK snRNP complex at least composed of P-TEFb (composed of CDK9 and CCNT1/cyclin-T1), HEXIM1, HEXIM2, BCDIN3, SART3 proteins and 7SK and U6 snRNAs. Interacts (via central region) with ZMYND8 (via N-terminus); the interaction is direct and the association appears to occur between homodimeric ZMYND8 and the activated form of the P-TEFb complex. Interacts with BRD4, targets chromatin binding. Interacts with JMJD6. Interacts with MDFIC. Interacts with HSF1. Interacts with HTATSF1. Interacts with TBX21. In terms of processing, ADP-ribosylation on serine residues by PARP1 in response to DNA damage disrupts the phase separation activity of CCNT1, thereby preventing activation of CDK9.

The protein localises to the nucleus. Its function is as follows. Regulatory subunit of the cyclin-dependent kinase pair (CDK9/cyclin-T1) complex, also called positive transcription elongation factor B (P-TEFb), which facilitates the transition from abortive to productive elongation by phosphorylating the CTD (C-terminal domain) of the large subunit of RNA polymerase II (RNA Pol II). Required to activate the protein kinase activity of CDK9: acts by mediating formation of liquid-liquid phase separation (LLPS) that enhances binding of P-TEFb to the CTD of RNA Pol II. In Equus caballus (Horse), this protein is Cyclin-T1 (CCNT1).